Here is an 86-residue protein sequence, read N- to C-terminus: Small ribosomal subunit protein uS15c (86 aa).

This sequence belongs to the universal ribosomal protein uS15 family. In terms of assembly, part of the 30S ribosomal subunit.

The protein localises to the plastid. This chain is Small ribosomal subunit protein uS15c (rps15), found in Cuscuta gronovii (Common dodder).